We begin with the raw amino-acid sequence, 116 residues long: Heme-degrading monooxygenase (116 aa).

The region spanning 2 to 92 is the ABM domain; the sequence is VIVTNTSKIT…EYILENKISF (91 aa). Asparagine 6 provides a ligand contact to Fe cation. Histidine 76 provides a ligand contact to heme.

It belongs to the antibiotic biosynthesis monooxygenase family. Heme-degrading monooxygenase IsdG subfamily. In terms of assembly, homodimer.

It localises to the cytoplasm. The enzyme catalyses heme b + 3 reduced [NADPH--hemoprotein reductase] + 3 O2 = biliverdin IXalpha + CO + Fe(2+) + 3 oxidized [NADPH--hemoprotein reductase] + 3 H2O + H(+). In terms of biological role, allows bacterial pathogens to use the host heme as an iron source. Catalyzes the oxidative degradation of the heme macrocyclic porphyrin ring to the biliverdin in the presence of a suitable electron donor such as ascorbate or NADPH--cytochrome P450 reductase, with subsequent release of free iron. The polypeptide is Heme-degrading monooxygenase (Halalkalibacterium halodurans (strain ATCC BAA-125 / DSM 18197 / FERM 7344 / JCM 9153 / C-125) (Bacillus halodurans)).